A 307-amino-acid chain; its full sequence is Taste receptor type 2 member 41 (307 aa).

The Extracellular portion of the chain corresponds to methionine 1–alanine 7. The chain crosses the membrane as a helical span at residues phenylalanine 8–valine 28. The Cytoplasmic portion of the chain corresponds to leucine 29–arginine 40. A helical membrane pass occupies residues leucine 41–valine 61. At glycine 62–histidine 88 the chain is on the extracellular side. A helical transmembrane segment spans residues tryptophan 89 to valine 109. Topologically, residues lysine 110–tryptophan 129 are cytoplasmic. A helical transmembrane segment spans residues valine 130 to tryptophan 150. Residues valine 151–serine 183 are Extracellular-facing. N-linked (GlcNAc...) asparagine glycosylation is present at asparagine 167. A helical transmembrane segment spans residues leucine 184 to isoleucine 204. Residues asparagine 205–lysine 234 lie on the Cytoplasmic side of the membrane. Residues serine 235–threonine 255 traverse the membrane as a helical segment. Topologically, residues lysine 256–phenylalanine 264 are extracellular. Residues tyrosine 265–phenylalanine 285 form a helical membrane-spanning segment. The Cytoplasmic portion of the chain corresponds to serine 286–alanine 307.

The protein belongs to the G-protein coupled receptor T2R family.

The protein resides in the membrane. Its function is as follows. Receptor that may play a role in the perception of bitterness and is gustducin-linked. May play a role in sensing the chemical composition of the gastrointestinal content. The activity of this receptor may stimulate alpha gustducin, mediate PLC-beta-2 activation and lead to the gating of TRPM5. The protein is Taste receptor type 2 member 41 (TAS2R41) of Pan paniscus (Pygmy chimpanzee).